The primary structure comprises 193 residues: Endoribonuclease YbeY (193 aa).

Zn(2+) is bound by residues His109, His113, and His119. Residues 143–193 (GAALREGRREGRAGEAKDRWTRSPTSISTPSRSGSTARGSRAKTSRAGSRT) form a disordered region. Positions 147-163 (REGRREGRAGEAKDRWT) are enriched in basic and acidic residues. The segment covering 164–181 (RSPTSISTPSRSGSTARG) has biased composition (low complexity).

Belongs to the endoribonuclease YbeY family. Zn(2+) serves as cofactor.

The protein localises to the cytoplasm. Functionally, single strand-specific metallo-endoribonuclease involved in late-stage 70S ribosome quality control and in maturation of the 3' terminus of the 16S rRNA. The polypeptide is Endoribonuclease YbeY (Anaeromyxobacter dehalogenans (strain 2CP-C)).